We begin with the raw amino-acid sequence, 257 residues long: Adenylate kinase (257 aa).

An ATP-binding site is contributed by 51-56; that stretch reads GAGKGT. An NMP region spans residues 71 to 100; it reads ATGDMLRSQVAKKTELGKEAKKIMDQGGLV. AMP-binding positions include Thr72, Arg77, 98 to 100, 127 to 130, and Gln134; these read GLV and GFPR. The LID stretch occupies residues 168–205; the sequence is GRLVHPASGRSYHKIFNPPKQEMKDDITGEPLIQRSDD. ATP-binding positions include Arg169 and 178–179; that span reads SY. AMP contacts are provided by Arg202 and Arg213. Residue Gln241 participates in ATP binding.

Belongs to the adenylate kinase family. AK2 subfamily. Monomer.

It localises to the cytoplasm. The protein resides in the cytosol. It is found in the mitochondrion intermembrane space. It catalyses the reaction AMP + ATP = 2 ADP. Its function is as follows. Catalyzes the reversible transfer of the terminal phosphate group between ATP and AMP. Plays an important role in cellular energy homeostasis and in adenine nucleotide metabolism. Adenylate kinase activity is critical for regulation of the phosphate utilization and the AMP de novo biosynthesis pathways. The chain is Adenylate kinase (adk1) from Aspergillus terreus (strain NIH 2624 / FGSC A1156).